The chain runs to 187 residues: Shikimate kinase (187 aa).

14-19 (TSGKST) contacts ATP. Ser18 provides a ligand contact to Mg(2+). Substrate is bound by residues Asp36, Arg60, and Gly82. Arg120 serves as a coordination point for ATP. Substrate is bound at residue Arg147.

Belongs to the shikimate kinase family. Monomer. The cofactor is Mg(2+).

It is found in the cytoplasm. The enzyme catalyses shikimate + ATP = 3-phosphoshikimate + ADP + H(+). It participates in metabolic intermediate biosynthesis; chorismate biosynthesis; chorismate from D-erythrose 4-phosphate and phosphoenolpyruvate: step 5/7. In terms of biological role, catalyzes the specific phosphorylation of the 3-hydroxyl group of shikimic acid using ATP as a cosubstrate. This Chloroherpeton thalassium (strain ATCC 35110 / GB-78) protein is Shikimate kinase.